The following is a 585-amino-acid chain: A-type ATP synthase subunit A (585 aa).

237 to 244 contacts ATP; the sequence is GPFGSGKT.

Belongs to the ATPase alpha/beta chains family. As to quaternary structure, has multiple subunits with at least A(3), B(3), C, D, E, F, H, I and proteolipid K(x).

The protein resides in the cell membrane. It carries out the reaction ATP + H2O + 4 H(+)(in) = ADP + phosphate + 5 H(+)(out). In terms of biological role, component of the A-type ATP synthase that produces ATP from ADP in the presence of a proton gradient across the membrane. The A chain is the catalytic subunit. This is A-type ATP synthase subunit A from Natronomonas pharaonis (strain ATCC 35678 / DSM 2160 / CIP 103997 / JCM 8858 / NBRC 14720 / NCIMB 2260 / Gabara) (Halobacterium pharaonis).